The sequence spans 1571 residues: Phospholipid-transporting ATPase DNF1 (1571 aa).

The segment at 1-94 (MSGTFHGDGH…TPKLNNGSGT (94 aa)) is disordered. Over 1–214 (MSGTFHGDGH…TFLPKNILFQ (214 aa)) the chain is Cytoplasmic. Positions 29 to 40 (EDTHIAPTHFDD) are enriched in basic and acidic residues. Polar residues predominate over residues 42–56 (ATSNKYSRPQVSFND). Phosphoserine is present on S53. Residues 66 to 76 (AEEFTFNDDTE) show a composition bias toward acidic residues. Phosphothreonine is present on T70. The segment covering 80-93 (HSFQPTPKLNNGSG) has biased composition (polar residues). S81 carries the post-translational modification Phosphoserine. At T85 the chain carries Phosphothreonine. S92 bears the Phosphoserine mark. The residue at position 94 (T94) is a Phosphothreonine. Residue S104 is modified to Phosphoserine. A Phosphothreonine modification is found at T109. Residues 215-235 (FHNFANVYFLVLIILGAFQIF) form a helical membrane-spanning segment. Residues 234–241 (IFGVTNPG) form an involved in phosphatidylcholine substrate selection region. Residues 236–239 (GVTN) lie on the Extracellular side of the membrane. A helical transmembrane segment spans residues 240–260 (PGLSAVPLVVIVIITAIKDAI). The Cytoplasmic portion of the chain corresponds to 261-553 (EDSRRTVLDL…RISRELNFSV (293 aa)). Phosphoserine occurs at positions 351, 354, 358, and 365. At Y368 the chain carries Phosphotyrosine. The chain crosses the membrane as a helical span at residues 554 to 574 (VINFVLLFILCFVSGIANGVY). The Extracellular portion of the chain corresponds to 575-594 (YDKKGRSRFSYEFGTIAGSA). The tract at residues 586–590 (EFGTI) is involved in phosphatidylcholine substrate selection. The helical transmembrane segment at 595–615 (ATNGFVSFWVAVILYQSLVPI) threads the bilayer. Over 616–1188 (SLYISVEIIK…WSYKRLAEMI (573 aa)) the chain is Cytoplasmic. D667 acts as the 4-aspartylphosphate intermediate in catalysis. 8 residues coordinate ATP: D667, K668, T669, E801, F842, S844, K847, and K871. D667 contributes to the Mg(2+) binding site. T669 is a binding site for Mg(2+). K895 is covalently cross-linked (Glycyl lysine isopeptide (Lys-Gly) (interchain with G-Cter in ubiquitin)). Residues R909, T910, T989, G990, D991, R1104, and K1110 each contribute to the ATP site. A Mg(2+)-binding site is contributed by D1130. ATP-binding residues include N1133 and D1134. D1134 is a binding site for Mg(2+). A helical transmembrane segment spans residues 1189-1209 (PEFFYKNMIFALALFWYGIYN). Residues 1210-1219 (DFDGSYLYEY) are Extracellular-facing. The chain crosses the membrane as a helical span at residues 1220 to 1240 (TYMMFYNLAFTSLPVIFLGIL). Residues 1241 to 1270 (DQDVNDTISLVVPQLYRVGILRKEWNQRKF) lie on the Cytoplasmic side of the membrane. A helical transmembrane segment spans residues 1271-1291 (LWYMLDGLYQSIICFFFPYLV). Over 1292–1307 (YHKNMIVTSNGLGLDH) the chain is Extracellular. Residues 1308-1328 (RYFVGVYVTTIAVISCNTYVL) traverse the membrane as a helical segment. Over 1329–1334 (LHQYRW) the chain is Cytoplasmic. Residues 1335–1355 (DWFSGLFIALSCLVVFAWTGI) form a helical membrane-spanning segment. The Extracellular portion of the chain corresponds to 1356–1375 (WSSAIASREFFKAAARIYGA). A helical transmembrane segment spans residues 1376-1396 (PSFWAVFFVAVLFCLLPRFTY). An a 1,2-diacyl-sn-glycero-3-phospho-L-serine-binding site is contributed by R1393. Topologically, residues 1397–1571 (DSFQKFFYPT…ASLIGTQQNN (175 aa)) are cytoplasmic. A Phosphoserine modification is found at S1506. Position 1551 is a phosphothreonine (T1551). A phosphoserine mark is found at S1552 and S1563.

This sequence belongs to the cation transport ATPase (P-type) (TC 3.A.3) family. Type IV subfamily. Component of a flippase complex consisting of DNF1 and LEM3. Interacts with LEM3; the interaction is direct and required for their mutual export from the endoplasmic reticulum. The cofactor is Mg(2+). In terms of processing, phosphorylated by FPK1 and KIN82.

Its subcellular location is the cell membrane. It localises to the endosome membrane. The protein localises to the golgi apparatus. The protein resides in the trans-Golgi network membrane. It is found in the cell septum. Its subcellular location is the bud. It catalyses the reaction ATP + H2O + phospholipidSide 1 = ADP + phosphate + phospholipidSide 2.. The enzyme catalyses a 1,2-diacyl-sn-glycero-3-phosphoethanolamine(out) + ATP + H2O = a 1,2-diacyl-sn-glycero-3-phosphoethanolamine(in) + ADP + phosphate + H(+). The catalysed reaction is a 1,2-diacyl-sn-glycero-3-phosphocholine(out) + ATP + H2O = a 1,2-diacyl-sn-glycero-3-phosphocholine(in) + ADP + phosphate + H(+). It carries out the reaction a beta-D-glucosyl-(1&lt;-&gt;1')-N-acylsphing-4-enine(out) + ATP + H2O = a beta-D-glucosyl-(1&lt;-&gt;1')-N-acylsphing-4-enine(in) + ADP + phosphate + H(+). It catalyses the reaction a 1,2-diacyl-sn-glycero-3-phospho-L-serine(out) + ATP + H2O = a 1,2-diacyl-sn-glycero-3-phospho-L-serine(in) + ADP + phosphate + H(+). Catalytic component of a P4-ATPase flippase complex which catalyzes the hydrolysis of ATP coupled to the transport of glucosylceramide, phosphatidylcholine, phosphatidylethanolamine, and small amounts of phosphatidylserine from the lumenal to the cytosolic leaflet of the cell membrane and ensures the maintenance of asymmetric distribution of phospholipids. Does not appear to transport sphingomyelin, inositol phosphoceramide, or phosphatidic acid. Required for efficient endocytosis. This chain is Phospholipid-transporting ATPase DNF1, found in Saccharomyces cerevisiae (strain ATCC 204508 / S288c) (Baker's yeast).